The chain runs to 97 residues: Homeobox protein HD-9 (97 aa).

The homeobox DNA-binding region spans 6–65 (MPAKKSRLSKAQRDFLDTYFEVNPHPNTQERAYIASQSLVSEEKIRNWFQNRRTRERGDC).

The protein resides in the nucleus. The polypeptide is Homeobox protein HD-9 (HD-9) (Encephalitozoon cuniculi (strain GB-M1) (Microsporidian parasite)).